The primary structure comprises 602 residues: Proline--tRNA ligase (602 aa).

It belongs to the class-II aminoacyl-tRNA synthetase family. ProS type 1 subfamily. In terms of assembly, homodimer.

The protein localises to the cytoplasm. It catalyses the reaction tRNA(Pro) + L-proline + ATP = L-prolyl-tRNA(Pro) + AMP + diphosphate. Its function is as follows. Catalyzes the attachment of proline to tRNA(Pro) in a two-step reaction: proline is first activated by ATP to form Pro-AMP and then transferred to the acceptor end of tRNA(Pro). As ProRS can inadvertently accommodate and process non-cognate amino acids such as alanine and cysteine, to avoid such errors it has two additional distinct editing activities against alanine. One activity is designated as 'pretransfer' editing and involves the tRNA(Pro)-independent hydrolysis of activated Ala-AMP. The other activity is designated 'posttransfer' editing and involves deacylation of mischarged Ala-tRNA(Pro). The misacylated Cys-tRNA(Pro) is not edited by ProRS. The sequence is that of Proline--tRNA ligase from Thermosynechococcus vestitus (strain NIES-2133 / IAM M-273 / BP-1).